A 447-amino-acid chain; its full sequence is GTPase Der (447 aa).

EngA-type G domains lie at 4–165 and 180–357; these read QIIT…PEEE and LQIV…KIWN. Residues 10-17, 57-61, 119-122, 186-193, 233-237, and 298-301 each bind GTP; these read GRPNVGKS, DTPGL, NKCE, GRPNAGKS, DTAGL, and NKWD. Positions 358-443 constitute a KH-like domain; that stretch reads KKITTSKLNE…PIRFTYVKTK (86 aa).

This sequence belongs to the TRAFAC class TrmE-Era-EngA-EngB-Septin-like GTPase superfamily. EngA (Der) GTPase family. As to quaternary structure, associates with the 50S ribosomal subunit.

Functionally, GTPase that plays an essential role in the late steps of ribosome biogenesis. The chain is GTPase Der from Rickettsia rickettsii (strain Sheila Smith).